A 603-amino-acid chain; its full sequence is Terpenoid synthase 25 (603 aa).

Residues Asp-356, Asp-360, Asn-500, Thr-504, and Glu-508 each contribute to the Mg(2+) site. A DDXXD motif motif is present at residues 356 to 360 (DDTCD).

Belongs to the terpene synthase family. Tpsa subfamily. Mg(2+) serves as cofactor. It depends on Mn(2+) as a cofactor. As to expression, predominantly expressed in roots but also in flowers.

It is found in the cytoplasm. The protein operates within secondary metabolite biosynthesis; terpenoid biosynthesis. In terms of biological role, involved in terpene biosynthesis in roots. Possesses sesquiterpene (C15) synthase activity in vitro. Does not seem to be involved in diterpene (C20) biosynthesis. In Arabidopsis thaliana (Mouse-ear cress), this protein is Terpenoid synthase 25.